A 537-amino-acid chain; its full sequence is Putative cysteine ligase BshC (537 aa).

The stretch at 422-450 (IEKVEGMIEQQRRLNKDLLDEVAGNQNNI) forms a coiled coil.

This sequence belongs to the BshC family.

Involved in bacillithiol (BSH) biosynthesis. May catalyze the last step of the pathway, the addition of cysteine to glucosamine malate (GlcN-Mal) to generate BSH. The polypeptide is Putative cysteine ligase BshC (Staphylococcus aureus (strain USA300)).